An 843-amino-acid polypeptide reads, in one-letter code: Neuroligin-1 (843 aa).

Residues M1 to S45 form the signal peptide. Residues Q46–S697 are Extracellular-facing. N109 is a glycosylation site (N-linked (GlcNAc...) (complex) asparagine). Disulfide bonds link C117–C153 and C172–C181. N303 and N343 each carry an N-linked (GlcNAc...) (complex) asparagine glycan. Disulfide bonds link C342–C353 and C512–C546. Residue N547 is glycosylated (N-linked (GlcNAc...) asparagine). Residues T647–D688 are disordered. Positions K661–F670 are enriched in polar residues. O-linked (GalNAc...) serine glycosylation is found at S683 and S686. The helical transmembrane segment at V698–Y718 threads the bilayer. Over Y719–V843 the chain is Cytoplasmic. A disordered region spans residues G822 to V843. Residues P831 to V843 are compositionally biased toward basic residues.

It belongs to the type-B carboxylesterase/lipase family. As to quaternary structure, interacts with neurexins NRXN1, NRXN2 and NRXN3. Interaction with neurexins is mediated by heparan sulfate glycan modification on neurexin. Interacts with NLGN3. Interacts (via its C-terminus) with DLG4/PSD-95 (via PDZ domain 3). Interacts with GOPC. Interacts with AIP1 and PDZRN3. Post-translationally, the N-terminus is blocked. As to expression, expressed in brain, almost exclusively in neurons, and spinal cord. Detected in pancreas islet beta cells.

The protein resides in the cell membrane. The protein localises to the postsynaptic density. It localises to the synaptic cleft. It is found in the synaptic cell membrane. In terms of biological role, cell surface protein involved in cell-cell-interactions via its interactions with neurexin family members. Plays a role in synapse function and synaptic signal transmission, and probably mediates its effects by recruiting and clustering other synaptic proteins. May promote the initial formation of synapses, but is not essential for this. In vitro, triggers the de novo formation of presynaptic structures. May be involved in specification of excitatory synapses. Required to maintain wakefulness quality and normal synchrony of cerebral cortex activity during wakefulness and sleep. The protein is involved in nervous system development. In Rattus norvegicus (Rat), this protein is Neuroligin-1 (Nlgn1).